Reading from the N-terminus, the 215-residue chain is Octanoyltransferase (215 aa).

The BPL/LPL catalytic domain maps to 33-209; the sequence is PDTPDQLWLV…QFARKLGYET (177 aa). Substrate is bound by residues 72-79, 139-141, and 152-154; these read RGGQVTYH, SLG, and GLA. The active-site Acyl-thioester intermediate is the Cys-170.

This sequence belongs to the LipB family.

It is found in the cytoplasm. The enzyme catalyses octanoyl-[ACP] + L-lysyl-[protein] = N(6)-octanoyl-L-lysyl-[protein] + holo-[ACP] + H(+). The protein operates within protein modification; protein lipoylation via endogenous pathway; protein N(6)-(lipoyl)lysine from octanoyl-[acyl-carrier-protein]: step 1/2. Functionally, catalyzes the transfer of endogenously produced octanoic acid from octanoyl-acyl-carrier-protein onto the lipoyl domains of lipoate-dependent enzymes. Lipoyl-ACP can also act as a substrate although octanoyl-ACP is likely to be the physiological substrate. The polypeptide is Octanoyltransferase (Cellvibrio japonicus (strain Ueda107) (Pseudomonas fluorescens subsp. cellulosa)).